A 433-amino-acid polypeptide reads, in one-letter code: N-lysine methyltransferase SMYD2 (433 aa).

The SET domain maps to 7 to 241 (GGLERFCSAG…PGDEVFTSYI (235 aa)). Residue 17–19 (KGR) participates in S-adenosyl-L-methionine binding. 8 residues coordinate Zn(2+): Cys52, Cys55, Cys65, Cys68, Cys74, Cys78, His86, and Cys90. Residues 52–90 (CECCFARKEGLSKCGRCKQAFYCDVECQKEDWPLHKLEC) form an MYND-type zinc finger. Residues His137, 206–207 (NH), and 258–260 (YFF) contribute to the S-adenosyl-L-methionine site. Ser283 bears the Phosphoserine mark.

The protein belongs to the class V-like SAM-binding methyltransferase superfamily. Interacts with RNA polymerase II and HELZ. Interacts with SIN3A and HDAC1. Interacts (via MYND-type zinc finger) with EPB41L3. Interacts (via SET domain) with p53/TP53. Interacts with RB1 and HSP90AA1.

It is found in the cytoplasm. It localises to the cytosol. Its subcellular location is the nucleus. The catalysed reaction is L-lysyl(4)-[histone H3] + 3 S-adenosyl-L-methionine = N(6),N(6),N(6)-trimethyl-L-lysyl(4)-[histone H3] + 3 S-adenosyl-L-homocysteine + 3 H(+). The enzyme catalyses L-lysyl-[protein] + S-adenosyl-L-methionine = N(6)-methyl-L-lysyl-[protein] + S-adenosyl-L-homocysteine + H(+). Its function is as follows. Protein-lysine N-methyltransferase that methylates both histones and non-histone proteins, including p53/TP53 and RB1. Specifically trimethylates histone H3 'Lys-4' (H3K4me3) in vivo. The activity requires interaction with HSP90alpha. Shows even higher methyltransferase activity on p53/TP53. Monomethylates 'Lys-370' of p53/TP53, leading to decreased DNA-binding activity and subsequent transcriptional regulation activity of p53/TP53. Monomethylates RB1 at 'Lys-860'. The polypeptide is N-lysine methyltransferase SMYD2 (Smyd2) (Rattus norvegicus (Rat)).